The following is a 307-amino-acid chain: tRNA dimethylallyltransferase (307 aa).

10 to 17 (GPTASGKS) provides a ligand contact to ATP. Position 12-17 (12-17 (TASGKS)) interacts with substrate. 2 interaction with substrate tRNA regions span residues 35–38 (DSMQ) and 159–163 (QRLCR).

Belongs to the IPP transferase family. In terms of assembly, monomer. Requires Mg(2+) as cofactor.

The enzyme catalyses adenosine(37) in tRNA + dimethylallyl diphosphate = N(6)-dimethylallyladenosine(37) in tRNA + diphosphate. Functionally, catalyzes the transfer of a dimethylallyl group onto the adenine at position 37 in tRNAs that read codons beginning with uridine, leading to the formation of N6-(dimethylallyl)adenosine (i(6)A). The protein is tRNA dimethylallyltransferase of Phenylobacterium zucineum (strain HLK1).